Consider the following 1036-residue polypeptide: Presequence protease, mitochondrial (1036 aa).

A mitochondrion-targeting transit peptide spans 1–15; it reads MWRFSGRRGLCAVQR. His-104 provides a ligand contact to Zn(2+). Residue Glu-107 is the Proton acceptor of the active site. Residues His-108 and Glu-205 each coordinate Zn(2+). The cysteines at positions 119 and 556 are disulfide-linked. Lys-759 carries the N6-acetyllysine modification. Lys-770 is subject to N6-acetyllysine; alternate. Lys-770 bears the N6-succinyllysine; alternate mark. Positions 806–833 are disordered; that stretch reads SKKERKPVRPHIVEKPTPSGPSGAAHVS. N6-succinyllysine is present on Lys-848. Lys-883 carries the N6-acetyllysine modification. N6-succinyllysine is present on Lys-945.

The protein belongs to the peptidase M16 family. PreP subfamily. Monomer and homodimer; homodimerization is induced by binding of the substrate. Zn(2+) serves as cofactor. Post-translationally, a disulfide bond locks the enzyme in the closed conformation preventing substrate entry into the catalytic chamber.

The protein resides in the mitochondrion matrix. With respect to regulation, mainly exists in a closed and catalytically competent conformation but a closed-to-open switch allows substrate entry into the catalytic chamber. Substrate binding induces closure and dimerization. A disulfide bond may lock the enzyme in a closed conformation preventing substrate entry into the catalytic chamber, participating in redox regulation of the enzyme. Inhibited by metal-chelating agents. Inhibited by nickel and zinc excess, and slightly activated by manganese. Metalloendopeptidase of the mitochondrial matrix that functions in peptide cleavage and degradation rather than in protein processing. Has an ATP-independent activity. Specifically cleaves peptides in the range of 5 to 65 residues. Shows a preference for cleavage after small polar residues and before basic residues, but without any positional preference. Degrades the transit peptides of mitochondrial proteins after their cleavage. Also degrades other unstructured peptides. It is also able to degrade amyloid-beta protein 40, one of the peptides produced by APP processing, when it accumulates in mitochondrion. It is a highly efficient protease, at least toward amyloid-beta protein 40. Cleaves that peptide at a specific position and is probably not processive, releasing digested peptides intermediates that can be further cleaved subsequently. It is also able to degrade amyloid-beta protein 42. The polypeptide is Presequence protease, mitochondrial (Mus musculus (Mouse)).